We begin with the raw amino-acid sequence, 243 residues long: MSDEGYRELVESKSAPTTPGPWSPDRERWKRHEAAWKQHCSWSHGLWCHCHDWTRHLKKETRECGSGTESGEDPAVSFDLVDDAAMLAAAGDAEPGAAGGGGVEVPKGPAPTLTTHAIRDLNQYKSQTQPPPLETSYTPGMWMLPELYQPQNSNNSWKDLVTGNRNRNRDPPRPSYLRERRRRSSTTTARRPRAMTSTPETPRKRRRTTRTRAGFERALTSLLEGLGVSEDSDSSSERDCWPF.

2 stretches are compositionally biased toward basic and acidic residues: residues 1-11 (MSDEGYRELVE) and 167-178 (RNRDPPRPSYLR). 2 disordered regions span residues 1 to 26 (MSDEGYRELVESKSAPTTPGPWSPDR) and 146 to 243 (ELYQ…CWPF). Low complexity predominate over residues 185-200 (STTTARRPRAMTSTPE).

This is an uncharacterized protein from Canis lupus familiaris (Dog).